The primary structure comprises 592 residues: BTB/POZ domain-containing protein At5g03250 (592 aa).

Residues 28–98 (SDVTIEVGDM…CYGVKIELTA (71 aa)) form the BTB domain. One can recognise an NPH3 domain in the interval 217–502 (DWWFDDASFL…VQVLFFEQLR (286 aa)). Tyrosine 443 is modified (phosphotyrosine).

The protein belongs to the NPH3 family.

It functions in the pathway protein modification; protein ubiquitination. In terms of biological role, may act as a substrate-specific adapter of an E3 ubiquitin-protein ligase complex (CUL3-RBX1-BTB) which mediates the ubiquitination and subsequent proteasomal degradation of target proteins. The polypeptide is BTB/POZ domain-containing protein At5g03250 (Arabidopsis thaliana (Mouse-ear cress)).